The primary structure comprises 610 residues: UvrABC system protein C (610 aa).

A GIY-YIG domain is found at 16–94; the sequence is SQPGVYRMYD…IKLYQPRYNV (79 aa). Residues 204–239 form the UVR domain; it reads QQVLTQLISRMEEASRLLHFEDAARIRDQIQAVRRV.

This sequence belongs to the UvrC family. As to quaternary structure, interacts with UvrB in an incision complex.

The protein resides in the cytoplasm. In terms of biological role, the UvrABC repair system catalyzes the recognition and processing of DNA lesions. UvrC both incises the 5' and 3' sides of the lesion. The N-terminal half is responsible for the 3' incision and the C-terminal half is responsible for the 5' incision. This chain is UvrABC system protein C, found in Yersinia enterocolitica serotype O:8 / biotype 1B (strain NCTC 13174 / 8081).